The following is a 200-amino-acid chain: Recombination protein RecR (200 aa).

A C4-type zinc finger spans residues 57–72 (CRQCRTLTEQELCPQC). One can recognise a Toprim domain in the interval 80–175 (TQLCVVEGPT…AATRIAHGVP (96 aa)).

This sequence belongs to the RecR family.

Its function is as follows. May play a role in DNA repair. It seems to be involved in an RecBC-independent recombinational process of DNA repair. It may act with RecF and RecO. This chain is Recombination protein RecR, found in Pseudomonas putida (strain GB-1).